The chain runs to 153 residues: Transcriptional repressor NrdR (153 aa).

A zinc finger lies at 3–34 (CPFCGYEDSKVVDTRPTNEGKTIKRRRECLKC). Residues 49-139 (ILVIKKDNRR…VYRQFKDINT (91 aa)) enclose the ATP-cone domain.

The protein belongs to the NrdR family. Zn(2+) serves as cofactor.

In terms of biological role, negatively regulates transcription of bacterial ribonucleotide reductase nrd genes and operons by binding to NrdR-boxes. The sequence is that of Transcriptional repressor NrdR from Caldicellulosiruptor bescii (strain ATCC BAA-1888 / DSM 6725 / KCTC 15123 / Z-1320) (Anaerocellum thermophilum).